We begin with the raw amino-acid sequence, 308 residues long: Putative acetyl-hydrolase LipR (308 aa).

The N-terminal stretch at 1-40 is a signal peptide; it reads MNLRKNVIRSVLRGARPLFASRRLGIAGRRVLLATLTAGA. Residues 76-78 carry the Involved in the stabilization of the negatively charged intermediate by the formation of the oxyanion hole motif; the sequence is HGG. Active-site residues include serine 146, aspartate 239, and histidine 269.

The protein belongs to the 'GDXG' lipolytic enzyme family.

Its function is as follows. Required for maintaining the appropriate mycolic acid composition and permeability of the envelope on its exposure to acidic pH. This chain is Putative acetyl-hydrolase LipR (lipR), found in Mycobacterium tuberculosis (strain ATCC 25618 / H37Rv).